Reading from the N-terminus, the 146-residue chain is MNSLSIFFIVVATAAVCLLFIQGYSIYENYGNIKEFNATHAAFEYSKSIGGTPALDRRVQDVNDTISDVKQKWRCVTYPGNGFVSASVFGFQAEVGPNNTRSIRKFNTMQQCIDFTFSDVINIDIYNPCVAPNINNAECQFLKSVL.

A helical; Signal-anchor for type II membrane protein transmembrane segment spans residues 1-21; the sequence is MNSLSIFFIVVATAAVCLLFI. The Virion surface portion of the chain corresponds to 22–146; the sequence is QGYSIYENYG…AECQFLKSVL (125 aa).

The protein belongs to the orthopoxvirus OPG155 protein family. As to quaternary structure, part of a stable entry-fusion complex (EFC) which is at least composed of proteins OPG143, OPG147, OPG155, OPG086, OPG094, OPG107, OPG104, and OPG099. Formation of the viral membrane is necessary for the assembly of the complex. Interacts directly with protein OPG107. Post-translationally, contains two intramolecular disulfide bonds. They are created by the viral disulfide bond formation pathway, a poxvirus-specific pathway that operates on the cytoplasmic side of the MV membranes.

The protein resides in the virion membrane. Functionally, envelope protein required for virus entry into host cell and for cell-cell fusion (syncytium formation). This is Envelope protein OPG155 (OPG155) from Bos taurus (Bovine).